A 398-amino-acid chain; its full sequence is Ethanolaminephosphotransferase 1 (398 aa).

Position 2 is an N-acetylalanine (Ala2). A run of 10 helical transmembrane segments spans residues 47 to 69 (WLAP…LLLT), 84 to 103 (HVPD…AYTL), 123 to 145 (LFDH…SIFG), 150 to 172 (GVSV…LSHW), 179 to 201 (VLFL…IVTA), 221 to 243 (LFTA…LNFF), 256 to 278 (VYEA…VWIL), 291 to 310 (IFYF…LIVC), 319 to 341 (TLNW…AATS), and 345 to 367 (SALL…VQVV). Position 388 (Sec388) is a non-standard amino acid, selenocysteine.

Belongs to the CDP-alcohol phosphatidyltransferase class-I family. Mg(2+) serves as cofactor. Requires Mn(2+) as cofactor.

It localises to the endoplasmic reticulum membrane. It catalyses the reaction CDP-ethanolamine + a 1,2-diacyl-sn-glycerol = a 1,2-diacyl-sn-glycero-3-phosphoethanolamine + CMP + H(+). It carries out the reaction 1-O-alkyl-2-acyl-sn-glycerol + CDP-ethanolamine = a 1-O-alkyl-2-acyl-sn-glycero-3-phosphoethanolamine + CMP + H(+). The protein operates within phospholipid metabolism; phosphatidylethanolamine biosynthesis; phosphatidylethanolamine from ethanolamine: step 3/3. In terms of biological role, ethanolaminephosphotransferase that catalyzes the transfer of phosphoethanolamine (PE) from CDP-ethanolamine to lipid acceptors, the final step in the synthesis of PE via the 'Kennedy' pathway. PE is the second most abundant phospholipid of membranes in mammals and is involved in various membrane-related cellular processes. The enzyme is critical for the synthesis of several PE species and also catalyzes the synthesis of plasmanyl-PE, a lipid required for proper myelination and neurodevelopment, from 1-alkyl-2-acylglycerol. In Mus musculus (Mouse), this protein is Ethanolaminephosphotransferase 1.